An 85-amino-acid chain; its full sequence is Protein Vpu (85 aa).

The Extracellular portion of the chain corresponds to 1 to 7 (MHHRDLL). Residues 8 to 28 (AIIIISALLFINVILWGFILR) form a helical membrane-spanning segment. The Cytoplasmic segment spans residues 29 to 85 (KYLEQKEQDRKEREILERLRRIREIRDDSDYESNGEEEQEVMDLVLSHGFDNPMFEP).

Belongs to the HIV-1 VPU protein family. As to quaternary structure, homopentamer. Interacts with host CD4 and BRTC; these interactions induce proteasomal degradation of CD4. Interacts with host BST2; this interaction leads to the degradation of host BST2. Interacts with host FBXW11. Interacts with host AP1M1; this interaction plays a role in the mistrafficking and subsequent degradation of host BST2. Interacts with host RANBP2; this interaction allows Vpu to down-regulate host BLM sumoylation. Phosphorylated by host CK2. This phosphorylation is necessary for interaction with human BTRC and degradation of CD4.

It localises to the host membrane. With respect to regulation, ion channel activity is inhibited by hexamethylene amiloride in vitro. Functionally, enhances virion budding by targeting host CD4 and Tetherin/BST2 to proteasome degradation. Degradation of CD4 prevents any unwanted premature interactions between viral Env and its host receptor CD4 in the endoplasmic reticulum. Degradation of antiretroviral protein Tetherin/BST2 is important for virion budding, as BST2 tethers new viral particles to the host cell membrane. Mechanistically, Vpu bridges either CD4 or BST2 to BTRC, a substrate recognition subunit of the Skp1/Cullin/F-box protein E3 ubiquitin ligase, induces their ubiquitination and subsequent proteasomal degradation. The alteration of the E3 ligase specificity by Vpu seems to promote the degradation of host IKBKB, leading to NF-kappa-B down-regulation and subsequent apoptosis. Acts as a viroporin that forms an oligomeric ion channel in membranes. Modulates the host DNA repair mechanisms to promote degradation of nuclear viral cDNA in cells that are already productively infected in order to suppress immune sensing and proviral hyper-integration (superinfection). Manipulates PML-NBs and modulates SUMOylation of host BLM protein thereby enhancing its DNA-end processing activity toward viral unintegrated linear DNA. Also inhibits RAD52-mediated homologous repair of viral cDNA, preventing the generation of dead-end circular forms of single copies of the long terminal repeat and permitting sustained nucleolytic attack. This chain is Protein Vpu, found in Human immunodeficiency virus type 1 group O (isolate ANT70) (HIV-1).